We begin with the raw amino-acid sequence, 443 residues long: Xaa-Pro dipeptidase (443 aa).

Residues Asp244, Asp255, His339, Glu384, and Glu423 each coordinate Mn(2+).

Belongs to the peptidase M24B family. Bacterial-type prolidase subfamily. Requires Mn(2+) as cofactor.

The catalysed reaction is Xaa-L-Pro dipeptide + H2O = an L-alpha-amino acid + L-proline. Its function is as follows. Splits dipeptides with a prolyl residue in the C-terminal position. The chain is Xaa-Pro dipeptidase from Pseudoalteromonas atlantica (strain T6c / ATCC BAA-1087).